A 209-amino-acid chain; its full sequence is MAKLYFYYAAMNAGKSTVLLQSSYNYRERGMQTLLFTPAIDTRFQYGTICSRIGLSEQAYAFNNSDNLYVLTQEFQLQTQKYSCVLIDEAQFLTREQVYQLTEITDQMSIPVLAYGLRTDFRGELFPGSQFLLAWADELIELKTICHCGRKAIMNMRIDENGQAVVEGEQVLIGGNESYVATCRLHYKRGEAEVTFPRNKLFNKDTNAF.

ATP is bound by residues Ala-9–Ser-16 and Asp-88–Gln-91. The active-site Proton acceptor is Glu-89. Zn(2+) is bound by residues Cys-146, Cys-148, Cys-183, and His-186.

Belongs to the thymidine kinase family. As to quaternary structure, homotetramer.

It is found in the cytoplasm. It carries out the reaction thymidine + ATP = dTMP + ADP + H(+). In Legionella pneumophila subsp. pneumophila (strain Philadelphia 1 / ATCC 33152 / DSM 7513), this protein is Thymidine kinase.